Reading from the N-terminus, the 836-residue chain is Outer membrane usher protein PapC (836 aa).

The first 24 residues, 1-24 (MKDRIPFAVNNITCVILLSLFCNA), serve as a signal peptide directing secretion. A disulfide bridge connects residues Cys814 and Cys832.

It belongs to the fimbrial export usher family.

Its subcellular location is the cell outer membrane. Its function is as follows. Involved in the export and assembly of pili subunits across the outer membrane. Forms a hexameric ring-shaped pore in the outer bacterial membrane. The 2 nanometer-diameter pore allows the passage of the thin tip fibrillum. As for the rod, it probably unwinds into linear fibers which would therefore be narrow enough to pass through the pore. The polypeptide is Outer membrane usher protein PapC (papC) (Escherichia coli).